The primary structure comprises 202 residues: MIGYLKGQILSLSEDSVLILVNGVGYEVNCAPVAVSALEEGQETALYIAESISPYDGTVLYGFLTKEDKQLWAIFKTSIPNTGAKKALEYLNKALRSVADFHNAIVKKDPKILTGIFGFTAKTAEKLIHSLDGKMDAVTIAGVPKIKIEGEAPFMSEVMMALTALGYSPMEARKAIDQLYKTGLANDSVENIIRAALRILKK.

The segment at 1 to 64 (MIGYLKGQIL…YDGTVLYGFL (64 aa)) is domain I. Residues 65–146 (TKEDKQLWAI…AVTIAGVPKI (82 aa)) are domain II. Positions 147–155 (KIEGEAPFM) are flexible linker. Residues 155–202 (MSEVMMALTALGYSPMEARKAIDQLYKTGLANDSVENIIRAALRILKK) are domain III.

This sequence belongs to the RuvA family. In terms of assembly, homotetramer. Forms an RuvA(8)-RuvB(12)-Holliday junction (HJ) complex. HJ DNA is sandwiched between 2 RuvA tetramers; dsDNA enters through RuvA and exits via RuvB. An RuvB hexamer assembles on each DNA strand where it exits the tetramer. Each RuvB hexamer is contacted by two RuvA subunits (via domain III) on 2 adjacent RuvB subunits; this complex drives branch migration. In the full resolvosome a probable DNA-RuvA(4)-RuvB(12)-RuvC(2) complex forms which resolves the HJ.

It localises to the cytoplasm. In terms of biological role, the RuvA-RuvB-RuvC complex processes Holliday junction (HJ) DNA during genetic recombination and DNA repair, while the RuvA-RuvB complex plays an important role in the rescue of blocked DNA replication forks via replication fork reversal (RFR). RuvA specifically binds to HJ cruciform DNA, conferring on it an open structure. The RuvB hexamer acts as an ATP-dependent pump, pulling dsDNA into and through the RuvAB complex. HJ branch migration allows RuvC to scan DNA until it finds its consensus sequence, where it cleaves and resolves the cruciform DNA. This chain is Holliday junction branch migration complex subunit RuvA, found in Elusimicrobium minutum (strain Pei191).